A 251-amino-acid polypeptide reads, in one-letter code: UPF0246 protein PEPE_1842 (251 aa).

It belongs to the UPF0246 family.

The protein is UPF0246 protein PEPE_1842 of Pediococcus pentosaceus (strain ATCC 25745 / CCUG 21536 / LMG 10740 / 183-1w).